Here is a 172-residue protein sequence, read N- to C-terminus: Small ribosomal subunit protein uS5 (172 aa).

The S5 DRBM domain maps to 17-80 (LREKMISVNR…EQARRNMFKV (64 aa)).

The protein belongs to the universal ribosomal protein uS5 family. As to quaternary structure, part of the 30S ribosomal subunit. Contacts proteins S4 and S8.

In terms of biological role, with S4 and S12 plays an important role in translational accuracy. Located at the back of the 30S subunit body where it stabilizes the conformation of the head with respect to the body. This is Small ribosomal subunit protein uS5 from Burkholderia pseudomallei (strain 1106a).